A 1402-amino-acid chain; its full sequence is DNA-directed RNA polymerase subunit beta' (1402 aa).

Zn(2+)-binding residues include Cys-71, Cys-73, Cys-86, and Cys-89. The Mg(2+) site is built by Asp-462, Asp-464, and Asp-466. Cys-811, Cys-885, Cys-892, and Cys-895 together coordinate Zn(2+).

The protein belongs to the RNA polymerase beta' chain family. In terms of assembly, the RNAP catalytic core consists of 2 alpha, 1 beta, 1 beta' and 1 omega subunit. When a sigma factor is associated with the core the holoenzyme is formed, which can initiate transcription. It depends on Mg(2+) as a cofactor. Zn(2+) serves as cofactor.

The enzyme catalyses RNA(n) + a ribonucleoside 5'-triphosphate = RNA(n+1) + diphosphate. Functionally, DNA-dependent RNA polymerase catalyzes the transcription of DNA into RNA using the four ribonucleoside triphosphates as substrates. This Bartonella henselae (strain ATCC 49882 / DSM 28221 / CCUG 30454 / Houston 1) (Rochalimaea henselae) protein is DNA-directed RNA polymerase subunit beta'.